A 488-amino-acid polypeptide reads, in one-letter code: ATP-dependent RNA helicase dbp3 (488 aa).

Residues 1–29 show a composition bias toward basic and acidic residues; sequence MAKREHQDQTGDSRPSKKSKGTKDTKKNT. Residues 1-42 form a disordered region; it reads MAKREHQDQTGDSRPSKKSKGTKDTKKNTEVSPPYFQSPALD. A Q motif motif is present at residues 92–100; it reads GFASPTAIQ. In terms of domain architecture, Helicase ATP-binding spans 104–279; sequence WPLLFAGRDV…STFMTSPVTV (176 aa). Residue 117–124 participates in ATP binding; it reads AETGSGKT. Residues 226-229 carry the DEAD box motif; sequence DEAD. The Helicase C-terminal domain occupies 306–457; sequence EKEQRLVQIL…EVPEALLKFG (152 aa).

It belongs to the DEAD box helicase family. DDX5/DBP2 subfamily.

Its subcellular location is the nucleus. The protein localises to the nucleolus. It carries out the reaction ATP + H2O = ADP + phosphate + H(+). In terms of biological role, ATP-dependent RNA helicase required for 60S ribosomal subunit synthesis. Involved in efficient pre-rRNA processing, predominantly at site A3, which is necessary for the normal formation of 25S and 5.8S rRNAs. The chain is ATP-dependent RNA helicase dbp3 (dbp3) from Emericella nidulans (strain FGSC A4 / ATCC 38163 / CBS 112.46 / NRRL 194 / M139) (Aspergillus nidulans).